Here is a 418-residue protein sequence, read N- to C-terminus: Phosphatidylcholine:ceramide cholinephosphotransferase 1 (418 aa).

Residues 12-75 (WSPKKVADWL…LDMIETLKME (64 aa)) form the SAM domain. Ser-13 is modified (phosphoserine). 5 helical membrane passes run 141–161 (FLAF…ISVV), 189–209 (FSIC…QWLL), 220–240 (FFCI…VTTL), 281–301 (MCGD…YLFI), and 309–329 (LWWY…CILL). Residue His-290 is part of the active site. Residues His-333 and Asp-337 contribute to the active site. A helical transmembrane segment spans residues 335–352 (TVDVVVAYYITTRLFWWY).

Belongs to the sphingomyelin synthase family. As to expression, widely expressed. Highest expression in the cardiovascular system.

The protein localises to the golgi apparatus membrane. The enzyme catalyses an N-acylsphing-4-enine + a 1,2-diacyl-sn-glycero-3-phosphocholine = a sphingomyelin + a 1,2-diacyl-sn-glycerol. The catalysed reaction is 1-(9Z-octadecenoyl)-2-acyl-sn-3-glycerol + a sphingomyelin = a 1-(9Z-octadecenoyl)-2-acyl-sn-glycero-3-phosphocholine + an N-acylsphing-4-enine. It catalyses the reaction N-hexadecanoylsphinganine + a 1,2-diacyl-sn-glycero-3-phosphocholine = N-hexadecanoyl-sphinganine-1-phosphocholine + a 1,2-diacyl-sn-glycerol. It carries out the reaction N-hexadecanoyl-(4R)-hydroxysphinganine + a 1,2-diacyl-sn-glycero-3-phosphocholine = N-hexadecanoyl-(4R)-hydroxysphinganine-phosphocholine + a 1,2-diacyl-sn-glycerol. The enzyme catalyses an N-acylsphing-4-enine + a 1,2-diacyl-sn-glycero-3-phosphoethanolamine = an N-acylsphing-4-enine 1-phosphoethanolamine + a 1,2-diacyl-sn-glycerol. It functions in the pathway sphingolipid metabolism. Functionally, major sphingomyelin synthase at the Golgi apparatus. Catalyzes the reversible transfer of phosphocholine moiety in sphingomyelin biosynthesis: in the forward reaction transfers phosphocholine head group of phosphatidylcholine (PC) on to ceramide (CER) to form ceramide phosphocholine (sphingomyelin, SM) and diacylglycerol (DAG) as by-product, and in the reverse reaction transfers phosphocholine from SM to DAG to form PC and CER. The direction of the reaction depends on the levels of CER and DAG in Golgi membranes. Converts the newly synthesized CER, that is transported from the endoplasmic reticulum to the trans-Golgi by the Cer transport protein (CERT), to SM. Can form a heteromeric complex with glucosylceramide synthase (GCS) increasing SMS activity and reducing glucosylceramide synthesis, a critical mechanism that controls the metabolic fate of CER in the Golgi. Does not use free phosphorylcholine or CDP-choline as donor. Can also transfer phosphoethanolamine head group of phosphatidylethanolamine (PE) on to CER to form ceramide phosphoethanolamine (CPE). Regulates receptor-mediated signal transduction via mitogenic DAG and proapoptotic CER, as well as via SM, a structural component of membrane rafts that serve as platforms for signal transduction and protein sorting. Plays a role in secretory transport via regulation of DAG pool at the Golgi apparatus and its downstream effects on PRKD1. The protein is Phosphatidylcholine:ceramide cholinephosphotransferase 1 (SGMS1) of Sus scrofa (Pig).